The sequence spans 225 residues: Ribonuclease T (225 aa).

The disordered stretch occupies residues 1 to 21 (MSEDHFDEEHEGHGGGGGSRH). One can recognise an Exonuclease domain in the interval 33–207 (VVVDVETGGF…YDTEKTAELF (175 aa)). Positions 36, 38, 194, and 199 each coordinate Mg(2+). His194 serves as the catalytic Proton donor/acceptor.

It belongs to the RNase T family. Homodimer. It depends on Mg(2+) as a cofactor.

In terms of biological role, trims short 3' overhangs of a variety of RNA species, leaving a one or two nucleotide 3' overhang. Responsible for the end-turnover of tRNA: specifically removes the terminal AMP residue from uncharged tRNA (tRNA-C-C-A). Also appears to be involved in tRNA biosynthesis. In Pseudomonas syringae pv. tomato (strain ATCC BAA-871 / DC3000), this protein is Ribonuclease T.